Reading from the N-terminus, the 595-residue chain is FERM domain-containing protein 3 (595 aa).

Residues 32–312 (MKCTIRLLDD…ENQAFYKYAK (281 aa)) enclose the FERM domain. A helical transmembrane segment spans residues 529 to 549 (LLVVGLGLLLFVFPLLLLLLE).

The protein localises to the membrane. Functionally, putative tumor suppressor gene that may be implicated in the origin and progression of lung cancer. The protein is FERM domain-containing protein 3 (Frmd3) of Mus musculus (Mouse).